The chain runs to 578 residues: Triokinase/FMN cyclase (578 aa).

One can recognise a DhaK domain in the interval 9 to 336 (SVAGCADDAL…IDAETTASAW (328 aa)). Residues 56-59 (GSGH), K109, and D114 contribute to the dihydroxyacetone site. The active-site Tele-hemiaminal-histidine intermediate is the H221. Residue S350 is modified to Phosphoserine. A DhaL domain is found at 372–571 (KQMVLVLEWV…AAAILRAILE (200 aa)). ATP contacts are provided by residues 401 to 404 (DGDC), 446 to 447 (SS), G486, and 494 to 495 (TM). Residues S511 and S545 each carry the phosphoserine modification. Residue 556-558 (DPG) coordinates ATP.

In terms of assembly, homodimer. Interacts with IFIH1 (via the CARD domains), the interaction is inhibited by viral infection. Mg(2+) serves as cofactor. Mn(2+) is required as a cofactor. The cofactor is Co(2+).

The catalysed reaction is dihydroxyacetone + ATP = dihydroxyacetone phosphate + ADP + H(+). It catalyses the reaction D-glyceraldehyde + ATP = D-glyceraldehyde 3-phosphate + ADP + H(+). The enzyme catalyses FAD = riboflavin cyclic-4',5'-phosphate + AMP + H(+). Its activity is regulated as follows. Each activity is inhibited by the substrate(s) of the other. Its function is as follows. Catalyzes both the phosphorylation of dihydroxyacetone and of glyceraldehyde, and the splitting of ribonucleoside diphosphate-X compounds among which FAD is the best substrate. Represses IFIH1-mediated cellular antiviral response. This chain is Triokinase/FMN cyclase (TKFC), found in Bos taurus (Bovine).